Reading from the N-terminus, the 437-residue chain is Probable glycine dehydrogenase (decarboxylating) subunit 1 (437 aa).

Belongs to the GcvP family. N-terminal subunit subfamily. The glycine cleavage system is composed of four proteins: P, T, L and H. In this organism, the P 'protein' is a heterodimer of two subunits.

The catalysed reaction is N(6)-[(R)-lipoyl]-L-lysyl-[glycine-cleavage complex H protein] + glycine + H(+) = N(6)-[(R)-S(8)-aminomethyldihydrolipoyl]-L-lysyl-[glycine-cleavage complex H protein] + CO2. The glycine cleavage system catalyzes the degradation of glycine. The P protein binds the alpha-amino group of glycine through its pyridoxal phosphate cofactor; CO(2) is released and the remaining methylamine moiety is then transferred to the lipoamide cofactor of the H protein. In Thermotoga petrophila (strain ATCC BAA-488 / DSM 13995 / JCM 10881 / RKU-1), this protein is Probable glycine dehydrogenase (decarboxylating) subunit 1.